The following is a 1309-amino-acid chain: Nuclear pore complex protein NUP1 (1309 aa).

Disordered stretches follow at residues 1–58, 83–118, 173–210, 266–296, 329–348, 384–417, 467–538, 594–617, and 635–680; these read MASA…GGGW, RKRL…HKED, AADS…GSMN, RTPF…VTPR, SKWE…SGLK, ESPL…NLVP, LGNL…EEHP, SEAM…NGSL, and SNMA…VFPN. The interval 2–677 is 25 X 2 AA repeats of F-G; the sequence is ASAARGESSN…LEEPKKPAAV (676 aa). Basic residues predominate over residues 22 to 32; the sequence is KFRKPTARRSQ. Residues 47 to 58 show a composition bias toward gly residues; sequence GLGGGDVRGGGW. Positions 91 to 101 are enriched in polar residues; the sequence is TPLQSPEQQKQ. Basic and acidic residues predominate over residues 195-204; sequence PSHERDRTHP. The segment covering 268–283 has biased composition (polar residues); it reads PFPQKSPTMSLVTKPS. Basic and acidic residues predominate over residues 396 to 405; it reads KTTHTSKDSA. Polar residues-rich tracts occupy residues 597 to 617 and 635 to 659; these read MPST…NGSL and SNMA…SGKP. Positions 660–673 are enriched in basic and acidic residues; sequence TSEEKRIPLEEPKK. Residues 711–712 form repeat 1; sequence FG. The interval 719–865 is disordered; that stretch reads KPTESKKTFS…VKNATFGNTS (147 aa). 2 stretches are compositionally biased toward low complexity: residues 728-741 and 767-783; these read SNSA…TSAA and SSPS…SDNS. Residues 789–803 show a composition bias toward polar residues; it reads STVQSFAATHNSSSI. Repeat unit 2 spans residues 804–805; the sequence is FG. Over residues 809 to 827 the composition is skewed to low complexity; the sequence is TSNDSNSQSTSASPLSSTS. 12 tandem repeats follow at residues 831 to 832, 861 to 862, 869 to 870, 883 to 884, 898 to 899, 927 to 928, 956 to 957, 983 to 984, 1004 to 1005, 1029 to 1030, 1038 to 1039, and 1053 to 1054. The segment covering 1004–1023 has biased composition (low complexity); the sequence is FGAGNAQTGNTGSGTTTSTQ. Positions 1004 to 1028 are disordered; that stretch reads FGAGNAQTGNTGSGTTTSTQSIPFQ. Residues 1068–1086 show a composition bias toward low complexity; it reads TPQLSSTNSSASSSSTMSS. The interval 1068–1105 is disordered; it reads TPQLSSTNSSASSSSTMSSPLFGTSWQAPNSSPNSGPV. Copy 15 of the repeat occupies 1089–1090; it reads FG. Residues 1096–1105 show a composition bias toward low complexity; it reads PNSSPNSGPV. 10 repeat units span residues 1121–1122, 1137–1138, 1151–1152, 1153–1154, 1166–1167, 1177–1178, 1186–1187, 1224–1225, 1238–1239, and 1255–1256. Positions 1278–1309 are disordered; the sequence is FQGGGSFSLGSTGGGDKSGRRIFKAKKSTRKK. A compositionally biased stretch (gly residues) spans 1279 to 1293; sequence QGGGSFSLGSTGGGD. A compositionally biased stretch (basic residues) spans 1297–1309; sequence RRIFKAKKSTRKK.

As to quaternary structure, part of the nuclear pore complex (NPC). The NPC has an eight-fold symmetrical structure comprising a central transport channel and two rings, the cytoplasmic and nuclear rings, to which eight filaments are attached. The cytoplasmic filaments have loose ends, while the nuclear filaments are joined in a distal ring, forming a nuclear basket. NPCs are highly dynamic in configuration and composition, and can be devided in 3 subcomplexes, the NUP62 subcomplex, the NUP107-160 subcomplex and the NUP93 subcomplex, containing approximately 30 different nucleoporin proteins. Interacts with EER5, anchoring the TREX-2 complex on the nuclear pore complex. Interacts with UCH1 and UCH2.

The protein resides in the nucleus envelope. It is found in the nucleus. The protein localises to the nuclear pore complex. It localises to the cytoplasm. Its subcellular location is the cytosol. In terms of biological role, nucleoporin required for nuclear mRNA export. Functions as an adapter and/or regulator molecule in the periphery of the nuclear pore complex (NPC). May interact with importin proteins and mediate active nucleocytoplasmic transport through the NPC. Involved in regulation of nuclear morphology. The polypeptide is Nuclear pore complex protein NUP1 (Arabidopsis thaliana (Mouse-ear cress)).